The primary structure comprises 295 residues: MIKVFNRKEKIYDIEKVAGDNYLKWIYSSPVGLNFLELMIKKKFFSKLYGKYCDSKHSAKKVSKFIDDFNINEKEFTLKKSDFKSFNDFFYRKLNNDARPIINDENILISPADGRLFAYENIDIHNLIQVKGLTYSLDELLKNIELAEKYIGGTCLLFRLAPVDYHRFHFIDDGICEEAVKISGSYYSVNPIALEKVPKLFCENKREYSIFHSKHFGDVLYVDVGATCVGSIIQTYTPNEYVVKGDEKGYFKFGGSTIILFFEKDKIIVDKDIVEQTQKGFECKVLMGEKIGTKL.

Active-site charge relay system; for autoendoproteolytic cleavage activity residues include Asp113, His169, and Ser256. The active-site Schiff-base intermediate with substrate; via pyruvic acid; for decarboxylase activity is the Ser256. Residue Ser256 is modified to Pyruvic acid (Ser); by autocatalysis.

It belongs to the phosphatidylserine decarboxylase family. PSD-B subfamily. Prokaryotic type II sub-subfamily. In terms of assembly, heterodimer of a large membrane-associated beta subunit and a small pyruvoyl-containing alpha subunit. Pyruvate is required as a cofactor. Post-translationally, is synthesized initially as an inactive proenzyme. Formation of the active enzyme involves a self-maturation process in which the active site pyruvoyl group is generated from an internal serine residue via an autocatalytic post-translational modification. Two non-identical subunits are generated from the proenzyme in this reaction, and the pyruvate is formed at the N-terminus of the alpha chain, which is derived from the carboxyl end of the proenzyme. The autoendoproteolytic cleavage occurs by a canonical serine protease mechanism, in which the side chain hydroxyl group of the serine supplies its oxygen atom to form the C-terminus of the beta chain, while the remainder of the serine residue undergoes an oxidative deamination to produce ammonia and the pyruvoyl prosthetic group on the alpha chain. During this reaction, the Ser that is part of the protease active site of the proenzyme becomes the pyruvoyl prosthetic group, which constitutes an essential element of the active site of the mature decarboxylase.

Its subcellular location is the cell membrane. The catalysed reaction is a 1,2-diacyl-sn-glycero-3-phospho-L-serine + H(+) = a 1,2-diacyl-sn-glycero-3-phosphoethanolamine + CO2. The protein operates within phospholipid metabolism; phosphatidylethanolamine biosynthesis; phosphatidylethanolamine from CDP-diacylglycerol: step 2/2. Its function is as follows. Catalyzes the formation of phosphatidylethanolamine (PtdEtn) from phosphatidylserine (PtdSer). The sequence is that of Phosphatidylserine decarboxylase proenzyme from Clostridium novyi (strain NT).